Here is a 292-residue protein sequence, read N- to C-terminus: Probable 2-(5''-triphosphoribosyl)-3'-dephosphocoenzyme-A synthase (292 aa).

This sequence belongs to the CitG/MdcB family.

It catalyses the reaction 3'-dephospho-CoA + ATP = 2'-(5''-triphospho-alpha-D-ribosyl)-3'-dephospho-CoA + adenine. The sequence is that of Probable 2-(5''-triphosphoribosyl)-3'-dephosphocoenzyme-A synthase from Shigella sonnei (strain Ss046).